A 279-amino-acid polypeptide reads, in one-letter code: 3-methyl-2-oxobutanoate hydroxymethyltransferase (279 aa).

D44 and D83 together coordinate Mg(2+). 3-methyl-2-oxobutanoate contacts are provided by residues 44-45, D83, and K113; that span reads DS. E115 contributes to the Mg(2+) binding site. Catalysis depends on E182, which acts as the Proton acceptor.

This sequence belongs to the PanB family. Homodecamer; pentamer of dimers. Mg(2+) is required as a cofactor.

It localises to the cytoplasm. The catalysed reaction is 3-methyl-2-oxobutanoate + (6R)-5,10-methylene-5,6,7,8-tetrahydrofolate + H2O = 2-dehydropantoate + (6S)-5,6,7,8-tetrahydrofolate. It functions in the pathway cofactor biosynthesis; (R)-pantothenate biosynthesis; (R)-pantoate from 3-methyl-2-oxobutanoate: step 1/2. In terms of biological role, catalyzes the reversible reaction in which hydroxymethyl group from 5,10-methylenetetrahydrofolate is transferred onto alpha-ketoisovalerate to form ketopantoate. This chain is 3-methyl-2-oxobutanoate hydroxymethyltransferase, found in Desulfotalea psychrophila (strain LSv54 / DSM 12343).